A 282-amino-acid polypeptide reads, in one-letter code: DegV domain-containing protein SPy_0865/M5005_Spy0672 (282 aa).

The DegV domain maps to 3 to 280 (LAVITDSTAT…EGAIAFGVTP (278 aa)). Residues threonine 61 and serine 94 each contribute to the hexadecanoate site.

In terms of biological role, may bind long-chain fatty acids, such as palmitate, and may play a role in lipid transport or fatty acid metabolism. The sequence is that of DegV domain-containing protein SPy_0865/M5005_Spy0672 from Streptococcus pyogenes serotype M1.